The sequence spans 321 residues: Biotin synthase (321 aa).

Positions 45-274 (FHGNRVDLCS…GALIRLCGGR (230 aa)) constitute a Radical SAM core domain. Cys63, Cys67, and Cys70 together coordinate [4Fe-4S] cluster. The [2Fe-2S] cluster site is built by Cys139, Cys199, and Arg269.

This sequence belongs to the radical SAM superfamily. Biotin synthase family. In terms of assembly, homodimer. [4Fe-4S] cluster is required as a cofactor. [2Fe-2S] cluster serves as cofactor.

It carries out the reaction (4R,5S)-dethiobiotin + (sulfur carrier)-SH + 2 reduced [2Fe-2S]-[ferredoxin] + 2 S-adenosyl-L-methionine = (sulfur carrier)-H + biotin + 2 5'-deoxyadenosine + 2 L-methionine + 2 oxidized [2Fe-2S]-[ferredoxin]. It participates in cofactor biosynthesis; biotin biosynthesis; biotin from 7,8-diaminononanoate: step 2/2. Its function is as follows. Catalyzes the conversion of dethiobiotin (DTB) to biotin by the insertion of a sulfur atom into dethiobiotin via a radical-based mechanism. The sequence is that of Biotin synthase from Pelotomaculum thermopropionicum (strain DSM 13744 / JCM 10971 / SI).